The following is a 306-amino-acid chain: Homoserine kinase (306 aa).

84–94 serves as a coordination point for ATP; that stretch reads PAGLGLGSSGA.

The protein belongs to the GHMP kinase family. Homoserine kinase subfamily.

The protein resides in the cytoplasm. It catalyses the reaction L-homoserine + ATP = O-phospho-L-homoserine + ADP + H(+). Its pathway is amino-acid biosynthesis; L-threonine biosynthesis; L-threonine from L-aspartate: step 4/5. Its function is as follows. Catalyzes the ATP-dependent phosphorylation of L-homoserine to L-homoserine phosphate. The chain is Homoserine kinase from Sulfolobus acidocaldarius (strain ATCC 33909 / DSM 639 / JCM 8929 / NBRC 15157 / NCIMB 11770).